The chain runs to 189 residues: Large ribosomal subunit protein bL17 (189 aa).

This sequence belongs to the bacterial ribosomal protein bL17 family. Part of the 50S ribosomal subunit. Contacts protein L32.

The polypeptide is Large ribosomal subunit protein bL17 (Rhodococcus jostii (strain RHA1)).